A 246-amino-acid chain; its full sequence is Transcriptional regulatory protein LytR (246 aa).

Positions 2 to 116 (KALIIDDEPL…RIEQAVNKVR (115 aa)) constitute a Response regulatory domain. Asp53 carries the 4-aspartylphosphate modification. One can recognise an HTH LytTR-type domain in the interval 141 to 245 (LPVEIDDKIH…MKDFKASIGL (105 aa)).

Homodimer; when phosphorylated. Post-translationally, phosphorylated and dephosphorylated by LytS.

Its subcellular location is the cytoplasm. In terms of biological role, member of the two-component regulatory system LytR/LytS that regulates genes involved in autolysis, programmed cell death, biofilm formation and cell wall metabolism. Also participates in sensing and responding to host defense cationic antimicrobial peptides (HDPs). Upon phosphorylation by LytS, functions as a transcription regulator by direct binding to promoter regions of target genes including lrgA and lrgB, to positively regulate their expression. In Staphylococcus aureus (strain USA300), this protein is Transcriptional regulatory protein LytR (lytR).